Consider the following 1061-residue polypeptide: Transcription termination factor 2 (1061 aa).

2 disordered regions span residues 1–163 (MSSE…TAEA) and 212–253 (ILSS…VKTS). Low complexity predominate over residues 32–46 (LSKSSRLSKSSRPSS). Phosphoserine is present on residues Ser108 and Ser110. Over residues 138 to 152 (LSDDDSEIEYSDEVQ) the composition is skewed to acidic residues. Residues Ser214 and Ser215 each carry the phosphoserine modification. Thr216 carries the post-translational modification Phosphothreonine. A compositionally biased stretch (polar residues) spans 237–253 (KSLSPRSSAGASVVKTS). In terms of domain architecture, Helicase ATP-binding spans 452 to 652 (WRERKLPRGG…YALLKFLRCS (201 aa)). 465 to 472 (DDMGLGKT) is an ATP binding site. Residues 485–523 (GQEMSEGKDESSDSDSEDDKNKKRKSVTGWKSKGRKDTR) are disordered. Basic residues predominate over residues 506–522 (KKRKSVTGWKSKGRKDT). The short motif at 603-606 (DEAH) is the DEAH box element. The Helicase C-terminal domain occupies 891–1056 (KINMVIQILK…SSKLTIDDLK (166 aa)).

The protein belongs to the SNF2/RAD54 helicase family.

Its subcellular location is the nucleus. In terms of biological role, dsDNA-dependent ATPase which acts as a transcription termination factor by coupling ATP hydrolysis with removal of RNA polymerase II from the DNA template. The sequence is that of Transcription termination factor 2 (lds) from Drosophila melanogaster (Fruit fly).